The sequence spans 113 residues: uncharacterized protein (113 aa).

This is an uncharacterized protein from Listeria innocua serovar 6a (strain ATCC BAA-680 / CLIP 11262).